The sequence spans 631 residues: Fusexin 1 (631 aa).

An N-terminal signal peptide occupies residues 1-19; that stretch reads MRRAALILAFVLFIGLSSA. The tract at residues 20–90 is domain I N-terminus; the sequence is TVTSADSITY…THQDSKLKYS (71 aa). Over 20-537 the chain is Extracellular; the sequence is TVTSADSITY…NLFGGSGSGD (518 aa). The domain II N-terminus stretch occupies residues 91–170; sequence TSTSDELRDI…KLATPAYIDN (80 aa). The Ca(2+) site is built by D112, S146, Y149, and D150. C125 and C155 are joined by a disulfide. The interval 143–148 is fusion loop, required for fusogenic activity, not required for membrane surface localization; sequence SVTSPV. A domain I central section region spans residues 171–224; that stretch reads PDEIFTAKAELQAGDKTIQSATLSNGDAGDGTVTDLGDSKISWNGNLDLGASEP. Residues 225 to 316 form a domain II C-terminus region; the sequence is ENSRVIALYS…KDSSLDTGSF (92 aa). Residues 317–348 form a domain I C-terminus region; it reads VYDTPELLSYPSFTVYVDAGENGYIEVTKPTG. Residues 349–455 form a domain III region; that stretch reads DPDIISTSST…SVSVTGIQQS (107 aa). Disulfide bonds link C389/C432, C457/C477, and C490/C506. Residues 443 to 467 form a disordered region; sequence DSTSVSVTGIQQSECNPGDQRREKN. The interval 456–509 is domain IV, required for fusogenic activity; the sequence is ECNPGDQRREKNENDRWEIYTCQDNGLTYEYDVTCAEDEKAVAQGDNQFSCEKQ. The interval 510–537 is stem; sequence DDDSGGGDNTGSDSGLFSNLFGGSGSGD. A helical transmembrane segment spans residues 538–558; sequence LLTQVHTALSILAGLVAGFFG. At 559–590 the chain is on the cytoplasmic side; that stretch reads YRGARWIHGETDIKGGFKLESRNVSRVKRGSP. Residues 591-611 traverse the membrane as a helical segment; it reads VAGIVGAVLGFVVGYGVASVF. Position 612 (H612) is a topological domain, extracellular. A helical transmembrane segment spans residues 613 to 630; that stretch reads PVVQIIVVLGIAVGLYYF. Residue R631 is a topological domain, cytoplasmic.

The protein belongs to the HAP2/GCS1 family. Fusexin 1 subfamily. As to quaternary structure, monomer in solution, crystallizes as a trimer in high salt (2.5 M NaCl, 0.2 M CaCl(2)). The trimer is stabilized by interdomain contacts and numerous Ca(2+) and Na(+) ions.

The protein resides in the cell surface. The protein localises to the cell membrane. Exhibits fusogenic activity. Mediates cell-cell fusion in mammalian cells when present in both cells (bilateral fusion). This chain is Fusexin 1, found in Uncultured archaeon.